Consider the following 449-residue polypeptide: Glutamyl-tRNA reductase (449 aa).

Substrate-binding positions include 58–61 (TCNR), Ser121, 126–128 (ETQ), and Gln132. Cys59 functions as the Nucleophile in the catalytic mechanism. 203–208 (GLGEMA) provides a ligand contact to NADP(+).

Belongs to the glutamyl-tRNA reductase family. In terms of assembly, homodimer.

It carries out the reaction (S)-4-amino-5-oxopentanoate + tRNA(Glu) + NADP(+) = L-glutamyl-tRNA(Glu) + NADPH + H(+). The protein operates within porphyrin-containing compound metabolism; protoporphyrin-IX biosynthesis; 5-aminolevulinate from L-glutamyl-tRNA(Glu): step 1/2. In terms of biological role, catalyzes the NADPH-dependent reduction of glutamyl-tRNA(Glu) to glutamate 1-semialdehyde (GSA). This chain is Glutamyl-tRNA reductase, found in Helicobacter pylori (strain HPAG1).